A 491-amino-acid chain; its full sequence is MASRCWRWWGWSAWPRTRLPPAGSTPSFCHHFSTQEKTPQICVVGSGPAGFYTAQHLLKHPQAHVDIYEKQPVPFGLVRFGVAPDHPEVKNVINTFTQTAHSGRCAFWGNVEVGRDVTVPELREAYHAVVLSYGAEDHRALEIPGEELPGVCSARAFVGWYNGLPENQELEPDLSCDTAVILGQGNVALDVARILLTPPEHLERTDITKAALGVLRQSRVKTVWLVGRRGPLQVAFTIKELREMIQLPGARPILDPVDFLGLQDKIKEVPRPRKRLTELLLRTATEKPGPAEAARQASASRAWGLRFFRSPQQVLPSPDGRRAAGVRLAVTRLEGVDEATRAVPTGDMEDLPCGLVLSSIGYKSRPVDPSVPFDSKLGVIPNVEGRVMDVPGLYCSGWVKRGPTGVIATTMTDSFLTGQMLLQDLKAGLLPSGPRPGYAAIQALLSSRGVRPVSFSDWEKLDAEEVARGQGTGKPREKLVDPQEMLRLLGH.

A mitochondrion-targeting transit peptide spans 1-32 (MASRCWRWWGWSAWPRTRLPPAGSTPSFCHHF). Positions 49, 69, 77, and 113 each coordinate FAD. Residues 184 to 187 (QGNV), 228 to 229 (RR), and glutamate 240 each bind NADP(+). Phosphoserine is present on residues serine 310 and serine 317. Residues tryptophan 398 and 405–407 (GVI) each bind FAD. An NADP(+)-binding site is contributed by glycine 405.

This sequence belongs to the ferredoxin--NADP reductase type 1 family. As to quaternary structure, monomer. Interacts directly with FDX1. It depends on FAD as a cofactor.

The protein localises to the mitochondrion. It is found in the mitochondrion inner membrane. The enzyme catalyses 2 reduced [adrenodoxin] + NADP(+) + H(+) = 2 oxidized [adrenodoxin] + NADPH. It carries out the reaction 2 reduced [2Fe-2S]-[ferredoxin] + NADP(+) + H(+) = 2 oxidized [2Fe-2S]-[ferredoxin] + NADPH. The protein operates within steroid metabolism; cholesterol metabolism. Functionally, serves as the first electron transfer protein in all the mitochondrial P450 systems including cholesterol side chain cleavage in all steroidogenic tissues, steroid 11-beta hydroxylation in the adrenal cortex, 25-OH-vitamin D3-24 hydroxylation in the kidney, and sterol C-27 hydroxylation in the liver. Also acts as a ferredoxin--NADP(+) reductase essential for coenzyme Q biosynthesis: together with FDX2, transfers the electrons required for the hydroxylation reaction performed by COQ6. The polypeptide is NADPH:adrenodoxin oxidoreductase, mitochondrial (Homo sapiens (Human)).